The chain runs to 1216 residues: Probable cation-transporting ATPase 13A5 (1216 aa).

Helical transmembrane passes span 33-53, 198-218, 222-242, 401-421, and 433-453; these read RALCLVTAILTLGAVQLMFYW, LLVKQVLNPFYVFQAFTLTLW, GYIEYSVAIIILTVISIVLSV, FMVFLACVGVVGFFYALGVYM, and MALILLSATVPPVLPAALTIG. Catalysis depends on Asp-486, which acts as the 4-aspartylphosphate intermediate. Asn-650 and Asn-817 each carry an N-linked (GlcNAc...) asparagine glycan. The Mg(2+) site is built by Asp-848 and Asp-852. 6 helical membrane-spanning segments follow: residues 896-916, 933-950, 971-991, 1040-1060, 1075-1095, and 1113-1133; these read ALVSSFGVFKYLTMYGIIQFI, YLLQDVAITLMVSLTMSI, LLLSVFMNSCFTCIVQVCTFL, FEGTTLWPIVTFNCISAAFIF, LFSLLLASAAGLTIFILFCDF, and VSILIAAFVQFCVAFFVEDAV.

It belongs to the cation transport ATPase (P-type) (TC 3.A.3) family. Type V subfamily. In terms of tissue distribution, specifically expressed in brain and stomach.

Its subcellular location is the membrane. It catalyses the reaction ATP + H2O = ADP + phosphate + H(+). This Mus musculus (Mouse) protein is Probable cation-transporting ATPase 13A5 (Atp13a5).